The chain runs to 163 residues: uncharacterized protein (163 aa).

This is an uncharacterized protein from Schizosaccharomyces pombe (strain 972 / ATCC 24843) (Fission yeast).